Reading from the N-terminus, the 157-residue chain is MAKGDFKLFDVVLDETIGRSTPDVEHERAVAIFDLIEENSFEPVGHPGGPYRLSLSLVNARLVFTITTQDGEAVATHILSLTPLRRIIKDYFMICESYYEAIRSSTPSQIEAIDMGRRGIHNDGSQTLKDRLKDKINLDFDSARRLFTLVCVLYWRG.

The protein belongs to the UPF0262 family.

This is UPF0262 protein Avi_0642 from Allorhizobium ampelinum (strain ATCC BAA-846 / DSM 112012 / S4) (Agrobacterium vitis (strain S4)).